A 123-amino-acid polypeptide reads, in one-letter code: Large ribosomal subunit protein bL12 (123 aa).

It belongs to the bacterial ribosomal protein bL12 family. In terms of assembly, homodimer. Part of the ribosomal stalk of the 50S ribosomal subunit. Forms a multimeric L10(L12)X complex, where L10 forms an elongated spine to which 2 to 4 L12 dimers bind in a sequential fashion. Binds GTP-bound translation factors.

Functionally, forms part of the ribosomal stalk which helps the ribosome interact with GTP-bound translation factors. Is thus essential for accurate translation. The protein is Large ribosomal subunit protein bL12 of Chlorobium luteolum (strain DSM 273 / BCRC 81028 / 2530) (Pelodictyon luteolum).